Consider the following 180-residue polypeptide: Oligoribonuclease (180 aa).

Positions 7–170 (LIWIDLEMTG…DDIRESIAEL (164 aa)) constitute an Exonuclease domain. The active site involves Tyr128.

It belongs to the oligoribonuclease family.

The protein resides in the cytoplasm. Functionally, 3'-to-5' exoribonuclease specific for small oligoribonucleotides. This chain is Oligoribonuclease, found in Pseudomonas fluorescens (strain ATCC BAA-477 / NRRL B-23932 / Pf-5).